A 276-amino-acid polypeptide reads, in one-letter code: Diaminopimelate epimerase (276 aa).

N13, Q46, and N66 together coordinate substrate. Residue C75 is the Proton donor of the active site. Substrate is bound by residues 76–77 (GN), N159, N192, and 210–211 (ER). C219 functions as the Proton acceptor in the catalytic mechanism. 220-221 (GT) lines the substrate pocket.

This sequence belongs to the diaminopimelate epimerase family. In terms of assembly, homodimer.

It is found in the cytoplasm. The catalysed reaction is (2S,6S)-2,6-diaminopimelate = meso-2,6-diaminopimelate. The protein operates within amino-acid biosynthesis; L-lysine biosynthesis via DAP pathway; DL-2,6-diaminopimelate from LL-2,6-diaminopimelate: step 1/1. Functionally, catalyzes the stereoinversion of LL-2,6-diaminopimelate (L,L-DAP) to meso-diaminopimelate (meso-DAP), a precursor of L-lysine and an essential component of the bacterial peptidoglycan. The polypeptide is Diaminopimelate epimerase (Stutzerimonas stutzeri (strain A1501) (Pseudomonas stutzeri)).